The chain runs to 224 residues: uncharacterized protein (224 aa).

This is an uncharacterized protein from Listeria monocytogenes serovar 1/2a (strain ATCC BAA-679 / EGD-e).